A 361-amino-acid chain; its full sequence is 3-dehydroquinate synthase (361 aa).

NAD(+)-binding positions include 71 to 76 (DGEQYK), 105 to 109 (GVIGD), 129 to 130 (TT), lysine 142, and lysine 151. The Zn(2+) site is built by glutamate 184, histidine 247, and histidine 264.

The protein belongs to the sugar phosphate cyclases superfamily. Dehydroquinate synthase family. Co(2+) is required as a cofactor. The cofactor is Zn(2+). Requires NAD(+) as cofactor.

The protein localises to the cytoplasm. It catalyses the reaction 7-phospho-2-dehydro-3-deoxy-D-arabino-heptonate = 3-dehydroquinate + phosphate. The protein operates within metabolic intermediate biosynthesis; chorismate biosynthesis; chorismate from D-erythrose 4-phosphate and phosphoenolpyruvate: step 2/7. Functionally, catalyzes the conversion of 3-deoxy-D-arabino-heptulosonate 7-phosphate (DAHP) to dehydroquinate (DHQ). The sequence is that of 3-dehydroquinate synthase from Pectobacterium atrosepticum (strain SCRI 1043 / ATCC BAA-672) (Erwinia carotovora subsp. atroseptica).